Here is a 249-residue protein sequence, read N- to C-terminus: Diaminopimelate epimerase (249 aa).

The substrate site is built by Asn11 and Asn60. Cys69 functions as the Proton donor in the catalytic mechanism. Substrate contacts are provided by residues 70–71 (GN), Asn164, and 182–183 (ER). The Proton acceptor role is filled by Cys192. 193 to 194 (GT) lines the substrate pocket.

Belongs to the diaminopimelate epimerase family. In terms of assembly, homodimer.

The protein localises to the cytoplasm. It carries out the reaction (2S,6S)-2,6-diaminopimelate = meso-2,6-diaminopimelate. The protein operates within amino-acid biosynthesis; L-lysine biosynthesis via DAP pathway; DL-2,6-diaminopimelate from LL-2,6-diaminopimelate: step 1/1. Its function is as follows. Catalyzes the stereoinversion of LL-2,6-diaminopimelate (L,L-DAP) to meso-diaminopimelate (meso-DAP), a precursor of L-lysine and an essential component of the bacterial peptidoglycan. This chain is Diaminopimelate epimerase, found in Campylobacter jejuni subsp. jejuni serotype O:6 (strain 81116 / NCTC 11828).